The sequence spans 475 residues: Tubulin gamma-1 chain (475 aa).

142 to 148 (AGGTGSG) serves as a coordination point for GTP. Positions 453–475 (VKRGNGPVDSKSEDSRSVTSAGS) are disordered.

The protein belongs to the tubulin family. As to quaternary structure, interacts with Ote.

It is found in the cytoplasm. It localises to the cytoskeleton. Its subcellular location is the microtubule organizing center. The protein resides in the centrosome. The protein localises to the perinuclear region. Its function is as follows. Tubulin is the major constituent of microtubules. The gamma chain is found at microtubule organizing centers (MTOC) such as the spindle poles or the centrosome, suggesting that it is involved in the minus-end nucleation of microtubule assembly. This chain is Tubulin gamma-1 chain (gammaTub23C), found in Drosophila melanogaster (Fruit fly).